A 378-amino-acid chain; its full sequence is Chorismate synthase (378 aa).

Arg-50 serves as a coordination point for NADP(+). Residues 127–129 (RAS), 255–256 (NA), Gly-300, 315–319 (KPTPS), and Arg-342 contribute to the FMN site.

The protein belongs to the chorismate synthase family. FMNH2 serves as cofactor.

The catalysed reaction is 5-O-(1-carboxyvinyl)-3-phosphoshikimate = chorismate + phosphate. It functions in the pathway metabolic intermediate biosynthesis; chorismate biosynthesis; chorismate from D-erythrose 4-phosphate and phosphoenolpyruvate: step 7/7. Catalyzes the anti-1,4-elimination of the C-3 phosphate and the C-6 proR hydrogen from 5-enolpyruvylshikimate-3-phosphate (EPSP) to yield chorismate, which is the branch point compound that serves as the starting substrate for the three terminal pathways of aromatic amino acid biosynthesis. This reaction introduces a second double bond into the aromatic ring system. The sequence is that of Chorismate synthase from Methanocaldococcus jannaschii (strain ATCC 43067 / DSM 2661 / JAL-1 / JCM 10045 / NBRC 100440) (Methanococcus jannaschii).